The following is a 364-amino-acid chain: V-type proton ATPase subunit d (364 aa).

The protein belongs to the V-ATPase V0D/AC39 subunit family. V-ATPase is a heteromultimeric enzyme composed of a peripheral catalytic V1 complex (components A to H) attached to an integral membrane V0 proton pore complex (components: a, c, c', c'', d, e, f and VOA1).

Its subcellular location is the vacuole membrane. Functionally, subunit of the V0 complex of vacuolar(H+)-ATPase (V-ATPase), a multisubunit enzyme composed of a peripheral complex (V1) that hydrolyzes ATP and a membrane integral complex (V0) that translocates protons. V-ATPase is responsible for acidifying and maintaining the pH of intracellular compartments. This subunit is a non-integral membrane component of the membrane pore domain and is required for proper assembly of the V0 sector. Might be involved in the regulated assembly of V1 subunits onto the membrane sector or alternatively may prevent the passage of protons through V0 pores. The chain is V-type proton ATPase subunit d from Neurospora crassa (strain ATCC 24698 / 74-OR23-1A / CBS 708.71 / DSM 1257 / FGSC 987).